Here is a 153-residue protein sequence, read N- to C-terminus: Vasotocin-neurophysin VT 1 (153 aa).

The first 19 residues, 1–19, serve as a signal peptide directing secretion; the sequence is MPQCALLLSLLGLLALSSA. A disulfide bond links Cys20 and Cys25. Position 28 is a glycine amide (Gly28). Intrachain disulfides connect Cys41-Cys85, Cys44-Cys58, Cys52-Cys75, Cys59-Cys65, Cys92-Cys105, Cys99-Cys117, and Cys106-Cys111.

It belongs to the vasopressin/oxytocin family. Post-translationally, seven disulfide bonds are present in neurophysin.

The protein localises to the secreted. Its function is as follows. Vasotocin is probably an antidiuretic hormone. The chain is Vasotocin-neurophysin VT 1 from Takifugu rubripes (Japanese pufferfish).